A 138-amino-acid polypeptide reads, in one-letter code: MRTLWIVAVWLMGVEGDLSQFGDMINKKTGTFGLFSYIYYGCYCGWGGKGKPQDATDRCCFVHDCCYGSVNGCDPKLSTYSYSFQNGDIVCGDDDPCLRAVCECDRVAAICFGENMNTYDKKYMLYSLFDCKEESEKC.

The first 16 residues, Met-1 to Gly-16, serve as a signal peptide directing secretion. Intrachain disulfides connect Cys-42–Cys-131, Cys-44–Cys-60, Cys-59–Cys-111, Cys-65–Cys-138, Cys-66–Cys-104, Cys-73–Cys-97, and Cys-91–Cys-102. Residues Tyr-43, Gly-45, and Gly-47 each contribute to the Ca(2+) site. The active site involves His-63. Position 64 (Asp-64) interacts with Ca(2+). Asp-105 is an active-site residue.

As to quaternary structure, monomer. Ca(2+) is required as a cofactor. As to expression, expressed by the venom gland.

Its subcellular location is the secreted. It catalyses the reaction a 1,2-diacyl-sn-glycero-3-phosphocholine + H2O = a 1-acyl-sn-glycero-3-phosphocholine + a fatty acid + H(+). In terms of biological role, snake venom phospholipase that inhibits ADP- and collagen-induced human platelet aggregation. This inhibition is completely inhibited by abolition of catalytic activity in case of collagen as inducer and partially inhibited in case of ADP as inducer. PLA2 catalyzes the calcium-dependent hydrolysis of the 2-acyl groups in 3-sn-phosphoglycerides. In Macrovipera lebetinus (Levantine viper), this protein is Acidic phospholipase A2 1.